The sequence spans 430 residues: Glutamate-1-semialdehyde 2,1-aminomutase (430 aa).

Residue Lys-265 is modified to N6-(pyridoxal phosphate)lysine.

The protein belongs to the class-III pyridoxal-phosphate-dependent aminotransferase family. HemL subfamily. As to quaternary structure, homodimer. Pyridoxal 5'-phosphate serves as cofactor.

The protein resides in the cytoplasm. The catalysed reaction is (S)-4-amino-5-oxopentanoate = 5-aminolevulinate. Its pathway is porphyrin-containing compound metabolism; protoporphyrin-IX biosynthesis; 5-aminolevulinate from L-glutamyl-tRNA(Glu): step 2/2. The sequence is that of Glutamate-1-semialdehyde 2,1-aminomutase from Shewanella sp. (strain MR-4).